We begin with the raw amino-acid sequence, 638 residues long: 1,4-alpha-glucan branching enzyme GlgB (638 aa).

The active-site Nucleophile is the aspartate 320. Glutamate 373 (proton donor) is an active-site residue.

The protein belongs to the glycosyl hydrolase 13 family. GlgB subfamily. In terms of assembly, monomer.

It carries out the reaction Transfers a segment of a (1-&gt;4)-alpha-D-glucan chain to a primary hydroxy group in a similar glucan chain.. The protein operates within glycan biosynthesis; glycogen biosynthesis. Catalyzes the formation of the alpha-1,6-glucosidic linkages in glycogen by scission of a 1,4-alpha-linked oligosaccharide from growing alpha-1,4-glucan chains and the subsequent attachment of the oligosaccharide to the alpha-1,6 position. This Oleidesulfovibrio alaskensis (strain ATCC BAA-1058 / DSM 17464 / G20) (Desulfovibrio alaskensis) protein is 1,4-alpha-glucan branching enzyme GlgB.